A 379-amino-acid polypeptide reads, in one-letter code: Cytochrome b (379 aa).

4 consecutive transmembrane segments (helical) span residues 32-52, 76-97, 112-132, and 177-197; these read FGSL…FLAM, WLIR…YMHI, WNVG…GYVL, and FFAF…IHLL. Positions 82 and 96 each coordinate heme b. H181 and H195 together coordinate heme b. Position 200 (H200) interacts with a ubiquinone. The next 4 membrane-spanning stretches (helical) occupy residues 225 to 245, 287 to 307, 319 to 339, and 346 to 366; these read YKDL…ALFS, LGGV…PFLH, LTQI…WIGG, and FIII…VLSP.

The protein belongs to the cytochrome b family. As to quaternary structure, the cytochrome bc1 complex contains 3 respiratory subunits (MT-CYB, CYC1 and UQCRFS1), 2 core proteins (UQCRC1 and UQCRC2) and probably 6 low-molecular weight proteins. Heme b is required as a cofactor.

Its subcellular location is the mitochondrion inner membrane. Its function is as follows. Component of the ubiquinol-cytochrome c reductase complex (complex III or cytochrome b-c1 complex) that is part of the mitochondrial respiratory chain. The b-c1 complex mediates electron transfer from ubiquinol to cytochrome c. Contributes to the generation of a proton gradient across the mitochondrial membrane that is then used for ATP synthesis. In Chlorophthalmus agassizi (Shortnose greeneye), this protein is Cytochrome b (mt-cyb).